The sequence spans 337 residues: GTPase Obg (337 aa).

In terms of domain architecture, Obg spans 1-158 (MFIDEVRILV…KRLRLELKLL (158 aa)). 2 stretches are compositionally biased toward basic and acidic residues: residues 61–74 (NPEH…HGEG) and 137–146 (PTEHEPGRPG). Disordered stretches follow at residues 61–83 (NPEH…AEGR) and 119–146 (GGRG…GRPG). Residues 159–330 (ADVGLVGFPN…LKHAMADRVL (172 aa)) form the OBG-type G domain. GTP is bound by residues 165–172 (GFPNAGKS), 190–194 (FTTLE), 212–215 (DIPG), 282–285 (TKMD), and 311–313 (SSA). Mg(2+) is bound by residues Ser172 and Thr192.

Belongs to the TRAFAC class OBG-HflX-like GTPase superfamily. OBG GTPase family. In terms of assembly, monomer. It depends on Mg(2+) as a cofactor.

It is found in the cytoplasm. Its function is as follows. An essential GTPase which binds GTP, GDP and possibly (p)ppGpp with moderate affinity, with high nucleotide exchange rates and a fairly low GTP hydrolysis rate. Plays a role in control of the cell cycle, stress response, ribosome biogenesis and in those bacteria that undergo differentiation, in morphogenesis control. In Solibacter usitatus (strain Ellin6076), this protein is GTPase Obg.